The sequence spans 150 residues: UPF0756 membrane protein Dd703_1075 (150 aa).

A run of 4 helical transmembrane segments spans residues 8 to 28 (LLIL…TITL), 51 to 71 (YGLS…IASG), 81 to 101 (AFLN…SWLG), and 114 to 134 (VVAG…GVPV).

The protein belongs to the UPF0756 family.

The protein resides in the cell membrane. The polypeptide is UPF0756 membrane protein Dd703_1075 (Musicola paradisiaca (strain Ech703) (Dickeya paradisiaca)).